Consider the following 555-residue polypeptide: Suppressor of tumorigenicity 7 protein-like (555 aa).

2 helical membrane passes run 36–56 (GLAGTGASLWFVAGLGLLYAL) and 80–100 (FYVALTGTSSLISGLIFIFEW). The disordered stretch occupies residues 126-148 (TESSISEPGSPSNNRESETSRQN).

This sequence belongs to the ST7 family.

It localises to the membrane. The sequence is that of Suppressor of tumorigenicity 7 protein-like (ST7L) from Bos taurus (Bovine).